A 1192-amino-acid polypeptide reads, in one-letter code: Plakophilin-4 (1192 aa).

The interval 1-31 is disordered; it reads MPAPEQASLVEEGQPQTRQEAASTGPGMEPE. Residues 36 to 70 are a coiled coil; that stretch reads TILASVKEQELQFQRLTRELEVERQIVASQLERCR. The disordered stretch occupies residues 73 to 262; it reads AESPSIASTS…PRPLNPSAYS (190 aa). A Phosphoserine modification is found at serine 75. A compositionally biased stretch (polar residues) spans 77-86; that stretch reads SIASTSSTEK. At threonine 84 the chain carries Phosphothreonine. 4 positions are modified to phosphoserine: serine 106, serine 132, serine 136, and serine 139. Composition is skewed to polar residues over residues 138-156, 163-204, and 214-230; these read GSLGNSRSSTQMNSYSDSG, FHNS…QPSV, and SVPSRAQSPSYVISTGV. Serine 221, serine 231, and serine 236 each carry phosphoserine. The segment covering 231–242 has biased composition (low complexity); that stretch reads SPSRGSLRTSLG. Omega-N-methylarginine is present on residues arginine 254 and arginine 270. 2 positions are modified to phosphoserine: serine 273 and serine 281. The segment at 290–310 is disordered; that stretch reads SVTSRQTSNPNGPTPQYQTTA. Phosphoserine occurs at positions 314, 327, and 337. The tract at residues 323–348 is disordered; sequence TRVASPSQGQVGSSSPKRSGMTAVPQ. Low complexity predominate over residues 325-338; it reads VASPSQGQVGSSSP. At tyrosine 372 the chain carries Phosphotyrosine. Phosphoserine occurs at positions 392, 403, and 406. A Phosphothreonine modification is found at threonine 412. Phosphotyrosine is present on tyrosine 415. Residues 415–455 form an ARM 1 repeat; it reads YEGRTYYSPVYRSPNHGTVELQGSQTALYRTGSVGIGNLQR. Phosphoserine is present on residues serine 422, serine 427, and serine 438. Tyrosine 478 carries the post-translational modification Phosphotyrosine. Phosphoserine is present on residues serine 510, serine 512, and serine 515. ARM repeat units follow at residues 518–557, 560–599, 604–644, 660–702, and 706–751; these read KDPREFAWRDPELPEVIHMLQHQFPSVQANAAAYLQHLCF, NKVKMEVCRLGGIKHLVDLLDHRVLEVQKNACGALRNLVF, DENK…NLSS, LTNT…NLSS, and EARK…NLSY. Basic and acidic residues predominate over residues 773 to 782; sequence GKESPSKDSE. The disordered stretch occupies residues 773-810; that stretch reads GKESPSKDSEPSCWGKKKKKKKRTPQEDQWDGVGPIPG. Serine 776 carries the phosphoserine modification. ARM repeat units follow at residues 815–855, 862–901, and 950–993; these read PKGV…NLSA, AYIRAAVRKEKGLPILVELLRMDNDRVVSSVATALRNMAL, and MENA…TLWQ. Threonine 1013 and threonine 1017 each carry phosphothreonine. Serine 1045 carries the phosphoserine modification. The segment at 1058–1086 is disordered; the sequence is PRSEYDRTQPPMQYYNSQGDATHKGLYPG. A compositionally biased stretch (polar residues) spans 1067 to 1077; it reads PPMQYYNSQGD. Serine 1091, serine 1100, and serine 1135 each carry phosphoserine.

Belongs to the beta-catenin family. As to quaternary structure, interacts with PDZD2. Interacts (via the C-terminus) with FRMPD2 (via the PDZ 2 domain). Interacts with RHOA; the interaction is detected at the midbody. Interacts with ECT2; the interaction is detected at the midbody. Interacts with CCDC85B. Expressed in salivary glands (at protein level). Expressed in arrector pili muscle (at protein level).

Its subcellular location is the cell junction. The protein localises to the desmosome. It is found in the cytoplasm. The protein resides in the cytoskeleton. It localises to the spindle. Its subcellular location is the midbody. The protein localises to the cell membrane. Plays a role as a regulator of Rho activity during cytokinesis. May play a role in junctional plaques. This is Plakophilin-4 (PKP4) from Homo sapiens (Human).